A 518-amino-acid chain; its full sequence is Putative succinate-semialdehyde dehydrogenase [NADP(+)] 2 (518 aa).

Residues 157–158, 181–184, and 232–233 each bind NADP(+); these read WN, KPDS, and GS. Glu254 functions as the Proton acceptor in the catalytic mechanism. Residue Leu255 participates in NADP(+) binding. The active-site Nucleophile is the Cys288. Glu386 provides a ligand contact to NADP(+).

Belongs to the aldehyde dehydrogenase family.

The catalysed reaction is succinate semialdehyde + NADP(+) + H2O = succinate + NADPH + 2 H(+). Functionally, catalyzes the NADP(+)-dependent oxidation of succinate semialdehyde to succinate. Although it has succinate semialdehyde dehydrogenase activity, is likely to act physiologically on a different aldehyde(s). In Mycobacterium bovis (strain ATCC BAA-935 / AF2122/97), this protein is Putative succinate-semialdehyde dehydrogenase [NADP(+)] 2 (gabD2).